Reading from the N-terminus, the 197-residue chain is Probable molybdenum cofactor guanylyltransferase (197 aa).

Residues 12–14 (LAG), lysine 24, aspartate 71, and aspartate 103 contribute to the GTP site. A Mg(2+)-binding site is contributed by aspartate 103.

The protein belongs to the MobA family. Requires Mg(2+) as cofactor.

Its subcellular location is the cytoplasm. It carries out the reaction Mo-molybdopterin + GTP + H(+) = Mo-molybdopterin guanine dinucleotide + diphosphate. Transfers a GMP moiety from GTP to Mo-molybdopterin (Mo-MPT) cofactor (Moco or molybdenum cofactor) to form Mo-molybdopterin guanine dinucleotide (Mo-MGD) cofactor. In Mycolicibacterium paratuberculosis (strain ATCC BAA-968 / K-10) (Mycobacterium paratuberculosis), this protein is Probable molybdenum cofactor guanylyltransferase.